We begin with the raw amino-acid sequence, 339 residues long: Photosystem II assembly lipoprotein Ycf48 (339 aa).

The N-terminal stretch at 1 to 22 (MVIVKSWQKIFALLVVLLLCIG) is a signal peptide. The N-palmitoyl cysteine moiety is linked to residue cysteine 23. Cysteine 23 carries the S-diacylglycerol cysteine lipid modification.

This sequence belongs to the Ycf48 family. In terms of assembly, part of early PSII assembly complexes which includes D1 (psbA) and PsbI; not found in mature PSII. Binds to the lumenal side of PSII complexes. Interacts with YidC.

It localises to the cellular thylakoid membrane. Its function is as follows. A factor required for optimal assembly of photosystem II (PSII), acting in the early stages of PSII assembly. Also plays a role in replacement of photodamaged D1 (psbA). Assists YidC in synthesis of chlorophyll-binding proteins. The polypeptide is Photosystem II assembly lipoprotein Ycf48 (Trichormus variabilis (strain ATCC 29413 / PCC 7937) (Anabaena variabilis)).